Consider the following 689-residue polypeptide: Glycine--tRNA ligase beta subunit (689 aa).

This sequence belongs to the class-II aminoacyl-tRNA synthetase family. In terms of assembly, tetramer of two alpha and two beta subunits.

It is found in the cytoplasm. It catalyses the reaction tRNA(Gly) + glycine + ATP = glycyl-tRNA(Gly) + AMP + diphosphate. This Shigella boydii serotype 18 (strain CDC 3083-94 / BS512) protein is Glycine--tRNA ligase beta subunit.